A 483-amino-acid chain; its full sequence is Homoserine O-acetyltransferase (483 aa).

One can recognise an AB hydrolase-1 domain in the interval 47–346; it reads NVILICHALT…HFGHDAFLLE (300 aa). Catalysis depends on Ser152, which acts as the Nucleophile. Residue Arg221 participates in substrate binding. Catalysis depends on residues Asp307 and His340. Asp341 contacts substrate. 2 consecutive CBS domains span residues 367–423 and 428–483; these read MSED…KISS and LSRD…KGTK.

This sequence belongs to the AB hydrolase superfamily. MetX family. Homodimer.

The protein resides in the cytoplasm. It catalyses the reaction L-homoserine + acetyl-CoA = O-acetyl-L-homoserine + CoA. Its pathway is amino-acid biosynthesis; L-methionine biosynthesis via de novo pathway; O-acetyl-L-homoserine from L-homoserine: step 1/1. Its function is as follows. Transfers an acetyl group from acetyl-CoA to L-homoserine, forming acetyl-L-homoserine. In Methanohalophilus mahii (strain ATCC 35705 / DSM 5219 / SLP), this protein is Homoserine O-acetyltransferase.